A 371-amino-acid polypeptide reads, in one-letter code: Mitogen-activated protein kinase homolog MMK2 (371 aa).

A Protein kinase domain is found at 37–323 (VPPIRSVGRG…VDEALCHPYM (287 aa)). Residues 43-51 (VGRGAYGIV) and Lys66 each bind ATP. The active-site Proton acceptor is Asp163. At Thr195 the chain carries Phosphothreonine. The TXY motif lies at 195 to 197 (TEY). Phosphotyrosine is present on Tyr197.

This sequence belongs to the protein kinase superfamily. CMGC Ser/Thr protein kinase family. MAP kinase subfamily. It depends on Mg(2+) as a cofactor. Dually phosphorylated on Thr-195 and Tyr-197, which activates the enzyme. Autophosphorylated.

The catalysed reaction is L-seryl-[protein] + ATP = O-phospho-L-seryl-[protein] + ADP + H(+). It carries out the reaction L-threonyl-[protein] + ATP = O-phospho-L-threonyl-[protein] + ADP + H(+). With respect to regulation, activated by tyrosine and threonine phosphorylation. The protein is Mitogen-activated protein kinase homolog MMK2 (MMK2) of Medicago sativa (Alfalfa).